A 640-amino-acid polypeptide reads, in one-letter code: Auxin efflux carrier component 3 (640 aa).

Residues 1-7 (MISWHDL) are Extracellular-facing. Residues 8–28 (YTVLTAVIPLYVAMILAYGSV) traverse the membrane as a helical segment. The Cytoplasmic portion of the chain corresponds to 29-38 (RWWKIFSPDQ). Residues 39–59 (CSGINRFVAIFAVPLLSFHFI) form a helical membrane-spanning segment. Valine 51 lines the (indol-3-yl)acetate pocket. Topologically, residues 60-71 (STNNPYAMNLRF) are extracellular. The chain crosses the membrane as a helical span at residues 72 to 92 (IAADTLQKIIMLSLLVLWANF). At 93-101 (TRSGSLEWS) the chain is on the cytoplasmic side. The helical transmembrane segment at 102-122 (ITIFSLSTLPNTLVMGIPLLI) threads the bilayer. Residues asparagine 112 and leucine 114 each coordinate (indol-3-yl)acetate. The Extracellular portion of the chain corresponds to 123–131 (AMYGEYSGS). Residues 132–152 (LMVQIVVLQCIIWYTLLLFLF) form a helical membrane-spanning segment. Residue tyrosine 145 participates in (indol-3-yl)acetate binding. At 153–500 (EFRGAKMLIM…LIRNPNTYSS (348 aa)) the chain is on the cytoplasmic side. 3 positions are modified to phosphoserine: serine 226, serine 243, and serine 283. The tract at residues 310 to 351 (APNPEFSSTTTSTANKSVNKNPKDVNTNQQTTLPTGGKSNSH) is disordered. The span at 314-348 (EFSSTTTSTANKSVNKNPKDVNTNQQTTLPTGGKS) shows a compositional bias: polar residues. Residue threonine 322 is modified to Phosphothreonine. Serine 366 is modified (phosphoserine). 2 disordered regions span residues 372 to 391 (AGLN…RSDQ) and 404 to 471 (SHNG…SQRK). The segment covering 430–442 (GKEEEAERPKDAE) has biased composition (basic and acidic residues). Residues 449–460 (APNSTAALQSKT) show a composition bias toward polar residues. A helical membrane pass occupies residues 501 to 521 (LIGLIWALVAFRWHVAMPKII). The Extracellular portion of the chain corresponds to 522–524 (QQS). Residues 525–545 (ISILSDAGLGMAMFSLGLFMA) traverse the membrane as a helical segment. Topologically, residues 546–559 (LQPKLIACGNSVAT) are cytoplasmic. A helical transmembrane segment spans residues 560-580 (FAMAVRFLTGPAVMAVAAIAI). Topologically, residues 581 to 585 (GLRGD) are extracellular. The chain crosses the membrane as a helical span at residues 586-606 (LLRVAIVQAALPQGIVPFVFA). (indol-3-yl)acetate contacts are provided by isoleucine 600 and valine 601. Over 607-619 (KEYNVHPAILSTG) the chain is Cytoplasmic. Residues 620 to 640 (VIFGMLIALPITLVYYILLGL) traverse the membrane as a helical segment.

Belongs to the auxin efflux carrier (TC 2.A.69.1) family. Homodimer. As to expression, predominantly expressed at the lateral side of shoot endodermis cells as well as root pericycle and columella cells.

The protein localises to the cell membrane. Its activity is regulated as follows. Auxin efflux carrier activity is competitively inhibited by naptalamate (N-1-naphthylphthalamic acid, NPA). Acts as a component of the auxin efflux carrier; this activity is enhanced when activated by PID-mediated phosphorylation. Seems to be involved in the lateral auxin transport system. Together with PIN4 and PIN7, involved in the connective auxin transport (CAT) that ensures communication across the shoot system, and modulates strigolactone-mediated shoot branching control. Binds auxins including indole-3-acetic acid (IAA). Coordinated polar localization of PIN3 is directly regulated by the vesicle trafficking process. The sequence is that of Auxin efflux carrier component 3 from Arabidopsis thaliana (Mouse-ear cress).